Here is a 928-residue protein sequence, read N- to C-terminus: Echinoderm microtubule-associated protein-like 4 (928 aa).

Positions 1–189 (MDGFAGSLDD…IPSDVENYDD (189 aa)) are microtubule-binding. The stretch at 14 to 63 (AASTSDVQDRLSALELRVQQQEDEITVLKAALADVLRRLAISEDQVATVR) forms a coiled coil. The interval 107 to 131 (SAAKSVKRSSTIEKSHNSWDASEES) is disordered. Over residues 116 to 131 (STIEKSHNSWDASEES) the composition is skewed to basic and acidic residues. WD repeat units follow at residues 199–237 (LKLE…LFNY), 241–288 (TQRH…VWDS), 296–336 (VIGL…VWDW), 343–378 (AEIK…FWTW), 385–424 (RKQG…IWSK), 442–480 (QISR…MWDH), 485–521 (EREI…LRGT), 524–563 (DGFQ…LWNS), 567–604 (SLEW…VLDA), 610–646 (VSIH…LYNV), 653–692 (YSRY…YWDI), 702–760 (RSDC…LFQY), and 767–806 (APSH…QWRL). Positions 821-928 (SSSAVNSPVV…ENQDDSSPLS (108 aa)) are disordered. The span at 836–845 (QPNTPTNLPQ) shows a compositional bias: polar residues. A compositionally biased stretch (acidic residues) spans 867–876 (DALEQPEELN). Polar residues predominate over residues 877–898 (EVQSEKCSSQPEGANGQEPSNE).

It belongs to the WD repeat EMAP family. In terms of assembly, homotrimer; self-association is mediated by the N-terminal coiled coil.

The protein localises to the cytoplasm. Its subcellular location is the cytoskeleton. It is found in the spindle. The protein resides in the microtubule organizing center. It localises to the midbody. Its function is as follows. Essential for the formation and stability of microtubules (MTs). Required for the organization of the mitotic spindle and for the proper attachment of kinetochores to MTs. Promotes the recruitment of NUDC to the mitotic spindle for mitotic progression. The chain is Echinoderm microtubule-associated protein-like 4 (eml4) from Xenopus tropicalis (Western clawed frog).